The following is a 485-amino-acid chain: Regulatory protein ViaA (485 aa).

Belongs to the ViaA family. In terms of assembly, homodimer. Interacts with RavA.

Its subcellular location is the cytoplasm. Its function is as follows. Component of the RavA-ViaA chaperone complex, which may act on the membrane to optimize the function of some of the respiratory chains. ViaA stimulates the ATPase activity of RavA. The protein is Regulatory protein ViaA of Photorhabdus laumondii subsp. laumondii (strain DSM 15139 / CIP 105565 / TT01) (Photorhabdus luminescens subsp. laumondii).